Here is a 215-residue protein sequence, read N- to C-terminus: Large ribosomal subunit protein uL3 (215 aa).

The segment at 136-155 (GVSISHRSHGSTGQRQDPGK) is disordered. Glutamine 151 is subject to N5-methylglutamine.

Belongs to the universal ribosomal protein uL3 family. As to quaternary structure, part of the 50S ribosomal subunit. Forms a cluster with proteins L14 and L19. In terms of processing, methylated by PrmB.

Its function is as follows. One of the primary rRNA binding proteins, it binds directly near the 3'-end of the 23S rRNA, where it nucleates assembly of the 50S subunit. The sequence is that of Large ribosomal subunit protein uL3 from Rickettsia felis (strain ATCC VR-1525 / URRWXCal2) (Rickettsia azadi).